Here is a 256-residue protein sequence, read N- to C-terminus: Zinc import ATP-binding protein ZnuC (256 aa).

In terms of domain architecture, ABC transporter spans 6–221; it reads IAAEGLSIRV…PEYRALFGTG (216 aa). Residue 38 to 45 coordinates ATP; the sequence is GPNGSGKS. Residues 237 to 256 form a disordered region; the sequence is HDDDCGHDHGAEHMHPHGDR.

Belongs to the ABC transporter superfamily. Zinc importer (TC 3.A.1.15.5) family. As to quaternary structure, the complex is composed of two ATP-binding proteins (ZnuC), two transmembrane proteins (ZnuB) and a solute-binding protein (ZnuA).

Its subcellular location is the cell inner membrane. It carries out the reaction Zn(2+)(out) + ATP(in) + H2O(in) = Zn(2+)(in) + ADP(in) + phosphate(in) + H(+)(in). Part of the ABC transporter complex ZnuABC involved in zinc import. Responsible for energy coupling to the transport system. The polypeptide is Zinc import ATP-binding protein ZnuC (Ruegeria pomeroyi (strain ATCC 700808 / DSM 15171 / DSS-3) (Silicibacter pomeroyi)).